A 339-amino-acid chain; its full sequence is Ornithine carbamoyltransferase (339 aa).

Carbamoyl phosphate-binding positions include 56-59 (STRT), arginine 107, and 134-137 (HPTQ). L-ornithine contacts are provided by residues asparagine 168, aspartate 232, and 236 to 237 (SM). Carbamoyl phosphate is bound by residues 274–275 (CL) and arginine 320.

Belongs to the aspartate/ornithine carbamoyltransferase superfamily. OTCase family.

Its subcellular location is the cytoplasm. It carries out the reaction carbamoyl phosphate + L-ornithine = L-citrulline + phosphate + H(+). It participates in amino-acid biosynthesis; L-arginine biosynthesis; L-arginine from L-ornithine and carbamoyl phosphate: step 1/3. Functionally, reversibly catalyzes the transfer of the carbamoyl group from carbamoyl phosphate (CP) to the N(epsilon) atom of ornithine (ORN) to produce L-citrulline. The polypeptide is Ornithine carbamoyltransferase (Buchnera aphidicola subsp. Baizongia pistaciae (strain Bp)).